Consider the following 65-residue polypeptide: Large ribosomal subunit protein bL35 (65 aa).

Belongs to the bacterial ribosomal protein bL35 family.

This Psychrobacter arcticus (strain DSM 17307 / VKM B-2377 / 273-4) protein is Large ribosomal subunit protein bL35.